Here is a 284-residue protein sequence, read N- to C-terminus: Probable endonuclease 4 (284 aa).

Positions 66, 106, 142, 176, 179, 213, 226, 228, and 258 each coordinate Zn(2+).

This sequence belongs to the AP endonuclease 2 family. Zn(2+) is required as a cofactor.

The catalysed reaction is Endonucleolytic cleavage to 5'-phosphooligonucleotide end-products.. Its function is as follows. Endonuclease IV plays a role in DNA repair. It cleaves phosphodiester bonds at apurinic or apyrimidinic (AP) sites, generating a 3'-hydroxyl group and a 5'-terminal sugar phosphate. This Natranaerobius thermophilus (strain ATCC BAA-1301 / DSM 18059 / JW/NM-WN-LF) protein is Probable endonuclease 4.